We begin with the raw amino-acid sequence, 351 residues long: Glycerol-3-phosphate dehydrogenase [NAD(P)+] (351 aa).

Residues S18, W19, R38, and K122 each contribute to the NADPH site. Sn-glycerol 3-phosphate contacts are provided by K122, G153, and S155. A157 serves as a coordination point for NADPH. Sn-glycerol 3-phosphate is bound by residues K208, D261, S271, R272, and N273. K208 acts as the Proton acceptor in catalysis. R272 is an NADPH binding site. E297 lines the NADPH pocket.

This sequence belongs to the NAD-dependent glycerol-3-phosphate dehydrogenase family.

The protein resides in the cytoplasm. It catalyses the reaction sn-glycerol 3-phosphate + NAD(+) = dihydroxyacetone phosphate + NADH + H(+). The catalysed reaction is sn-glycerol 3-phosphate + NADP(+) = dihydroxyacetone phosphate + NADPH + H(+). Its pathway is membrane lipid metabolism; glycerophospholipid metabolism. Its function is as follows. Catalyzes the reduction of the glycolytic intermediate dihydroxyacetone phosphate (DHAP) to sn-glycerol 3-phosphate (G3P), the key precursor for phospholipid synthesis. The chain is Glycerol-3-phosphate dehydrogenase [NAD(P)+] from Bordetella bronchiseptica (strain ATCC BAA-588 / NCTC 13252 / RB50) (Alcaligenes bronchisepticus).